A 236-amino-acid chain; its full sequence is Eukaryotic translation initiation factor 3 subunit J (236 aa).

The segment at 1 to 88 (MADDWESAAD…EAEAQRVASL (88 aa)) is disordered. The segment covering 28–46 (GEDEDEDIKDSWEDEEEKK) has biased composition (acidic residues). Basic and acidic residues-rich tracts occupy residues 47–58 (DEEKPTKTEAPA) and 68–77 (AKLEQQARLE).

This sequence belongs to the eIF-3 subunit J family. As to quaternary structure, component of the eukaryotic translation initiation factor 3 (eIF-3) complex. The eIF-3 complex interacts with pix.

It is found in the cytoplasm. Component of the eukaryotic translation initiation factor 3 (eIF-3) complex, which is involved in protein synthesis of a specialized repertoire of mRNAs and, together with other initiation factors, stimulates binding of mRNA and methionyl-tRNAi to the 40S ribosome. The eIF-3 complex specifically targets and initiates translation of a subset of mRNAs involved in cell proliferation. The polypeptide is Eukaryotic translation initiation factor 3 subunit J (Drosophila erecta (Fruit fly)).